Reading from the N-terminus, the 813-residue chain is Leucine--tRNA ligase (813 aa).

The 'HIGH' region motif lies at 40 to 51; it reads SYPSGSKLHAGH. The short motif at 572-576 is the 'KMSKS' region element; it reads KMSKS. Residue Lys575 participates in ATP binding.

This sequence belongs to the class-I aminoacyl-tRNA synthetase family.

Its subcellular location is the cytoplasm. It carries out the reaction tRNA(Leu) + L-leucine + ATP = L-leucyl-tRNA(Leu) + AMP + diphosphate. This chain is Leucine--tRNA ligase, found in Clostridium botulinum (strain ATCC 19397 / Type A).